A 466-amino-acid chain; its full sequence is Dihydrolipoyl dehydrogenase 3 (466 aa).

Residues 33 to 42 (EGRSTLGGTC), Lys-51, and Gly-115 contribute to the FAD site. A disulfide bond links Cys-42 and Cys-47. Residues 181–185 (GAGVI), Glu-204, Val-238, and 271–274 (AIGR) contribute to the NAD(+) site. Positions 313 and 321 each coordinate FAD. Catalysis depends on His-445, which acts as the Proton acceptor.

The protein belongs to the class-I pyridine nucleotide-disulfide oxidoreductase family. As to quaternary structure, homodimer. The cofactor is FAD.

The protein localises to the cytoplasm. The enzyme catalyses N(6)-[(R)-dihydrolipoyl]-L-lysyl-[protein] + NAD(+) = N(6)-[(R)-lipoyl]-L-lysyl-[protein] + NADH + H(+). LPD-3 may substitute for lipoamide dehydrogenase of the 2-oxoglutarate dehydrogenase and pyruvate multienzyme complexes when the latter is inactive or missing. This chain is Dihydrolipoyl dehydrogenase 3 (lpd3), found in Pseudomonas putida (Arthrobacter siderocapsulatus).